The following is a 284-amino-acid chain: Shikimate dehydrogenase (NADP(+)) (284 aa).

Shikimate-binding positions include 20-22 (SIS) and Ser67. Lys71 serves as the catalytic Proton acceptor. Residue Asp83 coordinates NADP(+). Residues Asn92 and Asp107 each contribute to the shikimate site. NADP(+)-binding positions include 129–133 (GAGGA) and Ile227. Position 229 (Tyr229) interacts with shikimate. Gly250 serves as a coordination point for NADP(+).

The protein belongs to the shikimate dehydrogenase family. As to quaternary structure, homodimer.

It catalyses the reaction shikimate + NADP(+) = 3-dehydroshikimate + NADPH + H(+). It functions in the pathway metabolic intermediate biosynthesis; chorismate biosynthesis; chorismate from D-erythrose 4-phosphate and phosphoenolpyruvate: step 4/7. Its function is as follows. Involved in the biosynthesis of the chorismate, which leads to the biosynthesis of aromatic amino acids. Catalyzes the reversible NADPH linked reduction of 3-dehydroshikimate (DHSA) to yield shikimate (SA). This chain is Shikimate dehydrogenase (NADP(+)), found in Streptococcus pneumoniae (strain JJA).